A 185-amino-acid chain; its full sequence is Dual specificity protein phosphatase 3 (185 aa).

The 152-residue stretch at 28–179 (QPCNEVTPRI…LCQLNDRLAK (152 aa)) folds into the Tyrosine-protein phosphatase domain. The active-site Phosphocysteine intermediate is C124.

The protein belongs to the protein-tyrosine phosphatase family. Non-receptor class dual specificity subfamily. As to quaternary structure, microtubule inner protein component of sperm flagellar doublet microtubules. Interacts with VRK3; this interaction activates DUSP3 phosphatase activity.

The protein resides in the nucleus. The protein localises to the cytoplasm. It is found in the cytoskeleton. It localises to the flagellum axoneme. It catalyses the reaction O-phospho-L-tyrosyl-[protein] + H2O = L-tyrosyl-[protein] + phosphate. It carries out the reaction O-phospho-L-seryl-[protein] + H2O = L-seryl-[protein] + phosphate. The catalysed reaction is O-phospho-L-threonyl-[protein] + H2O = L-threonyl-[protein] + phosphate. In terms of biological role, shows activity both for tyrosine-protein phosphate and serine-protein phosphate, but displays a strong preference toward phosphotyrosines. Specifically dephosphorylates and inactivates ERK1 and ERK2. The protein is Dual specificity protein phosphatase 3 (DUSP3) of Homo sapiens (Human).